The primary structure comprises 317 residues: Melanocyte-stimulating hormone receptor (317 aa).

The Extracellular segment spans residues 1 to 37 (MPAQGSQRSXLGSLNSTLMATPSLGLAANQSGPQCLE). N-linked (GlcNAc...) asparagine glycosylation is found at asparagine 15 and asparagine 29. Residues 38–63 (VSVPDGLFLCLGLVSLVENMLVVAAI) form a helical membrane-spanning segment. The Cytoplasmic segment spans residues 64–72 (AKNRNLHSP). The chain crosses the membrane as a helical span at residues 73–93 (MYCFICCLALSDLLVSISNVL). The Extracellular portion of the chain corresponds to 94–118 (ETAVMLLLEAGALAVGATVVQQLDN). Residues 119 to 140 (VIDVLICSSMVSSLCFLGAIAM) form a helical membrane-spanning segment. At 141–163 (DRYISIFYALRYHSIVTLSRAQW) the chain is on the cytoplasmic side. The helical transmembrane segment at 164-183 (ATAAVWAASILSSTLFIAYY) threads the bilayer. Topologically, residues 184-191 (DRTVVLLC) are extracellular. A helical membrane pass occupies residues 192-211 (LVVFFLAMLVLMAVLYAHML). Topologically, residues 212-240 (TQACQHVQGITRLHKRQHLVQQGFGLKGA) are cytoplasmic. A helical transmembrane segment spans residues 241-266 (ATLTILLGVFLLCWGPFFLHLTLIAV). The Extracellular segment spans residues 267 to 279 (CPQHPTCSCVFKN). The chain crosses the membrane as a helical span at residues 280–300 (FKLFLALIICNAIVDPLIYAF). At 301 to 317 (RSQELRKTLKEVLLFSW) the chain is on the cytoplasmic side.

Belongs to the G-protein coupled receptor 1 family. As to quaternary structure, interacts with MGRN1, but does not undergo MGRN1-mediated ubiquitination; this interaction competes with GNAS-binding and thus inhibits agonist-induced cAMP production. Interacts with OPN3; the interaction results in a decrease in MC1R-mediated cAMP signaling and ultimately a decrease in melanin production in melanocytes.

It localises to the cell membrane. In terms of biological role, receptor for MSH (alpha, beta and gamma) and ACTH. The activity of this receptor is mediated by G proteins which activate adenylate cyclase. Mediates melanogenesis, the production of eumelanin (black/brown) and phaeomelanin (red/yellow), via regulation of cAMP signaling in melanocytes. This chain is Melanocyte-stimulating hormone receptor (MC1R), found in Galago senegalensis (Northern lesser bushbaby).